The chain runs to 130 residues: Small ribosomal subunit protein uS9 (130 aa).

Residues 98 to 130 form a disordered region; the sequence is LKRAGLLTRDPRMKERKKPGLKKARRSPQFSKR. Positions 111–130 are enriched in basic residues; the sequence is KERKKPGLKKARRSPQFSKR.

The protein belongs to the universal ribosomal protein uS9 family.

This is Small ribosomal subunit protein uS9 from Staphylococcus epidermidis (strain ATCC 35984 / DSM 28319 / BCRC 17069 / CCUG 31568 / BM 3577 / RP62A).